Here is a 467-residue protein sequence, read N- to C-terminus: GTPase Obg (467 aa).

In terms of domain architecture, Obg spans 1 to 158 (MFYDEAKIFV…RWLRLELKLL (158 aa)). An OBG-type G domain is found at 159–333 (ADVGLVGLPN…LIRATWERLQ (175 aa)). GTP is bound by residues 165–172 (GLPNAGKS), 190–194 (FTTLE), 214–217 (DLPG), 285–288 (NKMD), and 314–316 (SAA). S172 and T192 together coordinate Mg(2+). An OCT domain is found at 352–430 (TLDRSQERWE…VAGRELVWEP (79 aa)).

This sequence belongs to the TRAFAC class OBG-HflX-like GTPase superfamily. OBG GTPase family. As to quaternary structure, monomer. Mg(2+) serves as cofactor.

It localises to the cytoplasm. In terms of biological role, an essential GTPase which binds GTP, GDP and possibly (p)ppGpp with moderate affinity, with high nucleotide exchange rates and a fairly low GTP hydrolysis rate. Plays a role in control of the cell cycle, stress response, ribosome biogenesis and in those bacteria that undergo differentiation, in morphogenesis control. This chain is GTPase Obg, found in Thermomicrobium roseum (strain ATCC 27502 / DSM 5159 / P-2).